Consider the following 699-residue polypeptide: Elongation factor G (699 aa).

Residues 8–288 (EDYRNFGIMA…AVVDYLPSPL (281 aa)) enclose the tr-type G domain. Residues 17 to 24 (AHIDAGKT), 86 to 90 (DTPGH), and 140 to 143 (NKMD) contribute to the GTP site.

It belongs to the TRAFAC class translation factor GTPase superfamily. Classic translation factor GTPase family. EF-G/EF-2 subfamily.

The protein localises to the cytoplasm. Its function is as follows. Catalyzes the GTP-dependent ribosomal translocation step during translation elongation. During this step, the ribosome changes from the pre-translocational (PRE) to the post-translocational (POST) state as the newly formed A-site-bound peptidyl-tRNA and P-site-bound deacylated tRNA move to the P and E sites, respectively. Catalyzes the coordinated movement of the two tRNA molecules, the mRNA and conformational changes in the ribosome. The chain is Elongation factor G from Agrobacterium fabrum (strain C58 / ATCC 33970) (Agrobacterium tumefaciens (strain C58)).